The sequence spans 877 residues: DNA polymerase I (877 aa).

A 5'-3' exonuclease domain is found at 180-270 (TPAQFIDLKA…EIGLDDTLLK (91 aa)). One can recognise a 3'-5' exonuclease domain in the interval 308–468 (DEIDFEIVTD…AKEKMMAELL (161 aa)).

The protein belongs to the DNA polymerase type-A family. Single-chain monomer with multiple functions.

The catalysed reaction is DNA(n) + a 2'-deoxyribonucleoside 5'-triphosphate = DNA(n+1) + diphosphate. In addition to polymerase activity, this DNA polymerase exhibits 3'-5' and 5'-3' exonuclease activity. The chain is DNA polymerase I (polA) from Lactococcus lactis subsp. lactis (strain IL1403) (Streptococcus lactis).